The following is a 131-amino-acid chain: Small ribosomal subunit protein uS11 (131 aa).

The protein belongs to the universal ribosomal protein uS11 family. In terms of assembly, part of the 30S ribosomal subunit. Interacts with proteins S7 and S18. Binds to IF-3.

Located on the platform of the 30S subunit, it bridges several disparate RNA helices of the 16S rRNA. Forms part of the Shine-Dalgarno cleft in the 70S ribosome. In Cellvibrio japonicus (strain Ueda107) (Pseudomonas fluorescens subsp. cellulosa), this protein is Small ribosomal subunit protein uS11.